Reading from the N-terminus, the 700-residue chain is Elongation factor G (700 aa).

The tr-type G domain occupies 8 to 290 (ERYRNIGISA…AVIDYLPSPV (283 aa)). Residues 17 to 24 (AHIDAGKT), 88 to 92 (DTPGH), and 142 to 145 (NKMD) each bind GTP.

The protein belongs to the TRAFAC class translation factor GTPase superfamily. Classic translation factor GTPase family. EF-G/EF-2 subfamily.

It is found in the cytoplasm. In terms of biological role, catalyzes the GTP-dependent ribosomal translocation step during translation elongation. During this step, the ribosome changes from the pre-translocational (PRE) to the post-translocational (POST) state as the newly formed A-site-bound peptidyl-tRNA and P-site-bound deacylated tRNA move to the P and E sites, respectively. Catalyzes the coordinated movement of the two tRNA molecules, the mRNA and conformational changes in the ribosome. The polypeptide is Elongation factor G (Leptothrix cholodnii (strain ATCC 51168 / LMG 8142 / SP-6) (Leptothrix discophora (strain SP-6))).